A 567-amino-acid polypeptide reads, in one-letter code: Thiol:disulfide interchange protein DsbD (567 aa).

The first 19 residues, 1–19, serve as a signal peptide directing secretion; it reads MAQRIFTLILLLCSTSAFA. 2 disulfide bridges follow: Cys-122–Cys-128 and Cys-185–Cys-307. 7 helical membrane passes run 170 to 192, 212 to 234, 246 to 268, 297 to 319, 326 to 348, 358 to 380, and 387 to 409; these read ALWALLIGIGIAFTPCVLPMYPL, LAFIYVQGMALTYTALGLVVAAA, YVLIGLAIVFTLLALSMFGLFTL, GAIAGLICSPCTTAPLSAILLYI, WLGGGTLYLYALGMGLPLMLVTV, GPWMAHVKTAFGFVILALPVFLL, and AWGLRLWSLLGVAFFGWAFITSL. In terms of domain architecture, Thioredoxin spans 435 to 567; the sequence is QDWAFGSPSA…FSAHLHDRQP (133 aa). A disulfide bridge connects residues Cys-482 and Cys-485.

This sequence belongs to the thioredoxin family. DsbD subfamily.

It is found in the cell inner membrane. The catalysed reaction is [protein]-dithiol + NAD(+) = [protein]-disulfide + NADH + H(+). It catalyses the reaction [protein]-dithiol + NADP(+) = [protein]-disulfide + NADPH + H(+). Its function is as follows. Required to facilitate the formation of correct disulfide bonds in some periplasmic proteins and for the assembly of the periplasmic c-type cytochromes. Acts by transferring electrons from cytoplasmic thioredoxin to the periplasm. This transfer involves a cascade of disulfide bond formation and reduction steps. This Salmonella typhi protein is Thiol:disulfide interchange protein DsbD.